The primary structure comprises 199 residues: Large ribosomal subunit protein bL25 (199 aa).

A disordered region spans residues 1–21 (MNIEKTLSVQKREGYGKGPSG).

Belongs to the bacterial ribosomal protein bL25 family. CTC subfamily. Part of the 50S ribosomal subunit; part of the 5S rRNA/L5/L18/L25 subcomplex. Contacts the 5S rRNA. Binds to the 5S rRNA independently of L5 and L18.

Functionally, this is one of the proteins that binds to the 5S RNA in the ribosome where it forms part of the central protuberance. The protein is Large ribosomal subunit protein bL25 of Desulfovibrio desulfuricans (strain ATCC 27774 / DSM 6949 / MB).